A 784-amino-acid chain; its full sequence is Toll-like receptor 2 (784 aa).

The N-terminal stretch at 1–20 (MPRALWTAWVWAVISVFTEG) is a signal peptide. Residues 21-587 (ASDQASSLSC…ARLSLSECHR (567 aa)) lie on the Extracellular side of the membrane. Cys-30 and Cys-36 are disulfide-bonded. LRR repeat units lie at residues 54-77 (VKSL…RCVN), 78-101 (LKTL…HLRN), 102-125 (LEYL…SLYV), 126-150 (LKFL…HLPN), 151-175 (LRTL…GLTF), 176-199 (LEEL…SIQN), 200-223 (ISHL…IVSS), 224-250 (LDYL…INTS), 251-278 (VKKL…YVSG), 279-308 (ILEV…YLGN), 309-337 (VETL…LTGK), 338-361 (VKRV…HLKS), 362-388 (LEYL…AWPV), 389-414 (LQTL…TLKN), 415-437 (LNNL…WPGK), 438-457 (MKQL…CLPQ), 458-478 (TLEI…ILPQ), 479-500 (LKEL…FLPV), and 501-524 (LSVM…SFPQ). N-linked (GlcNAc...) asparagine glycosylation occurs at Asn-114. Asn-199 carries an N-linked (GlcNAc...) asparagine glycan. A glycan (N-linked (GlcNAc...) asparagine) is linked at Asn-248. A disulfide bridge connects residues Cys-353 and Cys-382. Cys-432 and Cys-454 are joined by a disulfide. Residue Asn-442 is glycosylated (N-linked (GlcNAc...) asparagine). The 55-residue stretch at 525 to 579 (LKALEAGGNNFICSCDFLSFAQGQQALARVLVDWPDGYRCDAPSHVRGQRVQDAR) folds into the LRRCT domain. A helical membrane pass occupies residues 588–608 (AAVVSAVCCALFLLLLLTGVL). Over 609 to 784 (CHRFHGLWYM…WLNLRAAIRS (176 aa)) the chain is Cytoplasmic. Residues 639-782 (LCYDAFVSYS…AFWLNLRAAI (144 aa)) enclose the TIR domain. Lys-754 is covalently cross-linked (Glycyl lysine isopeptide (Lys-Gly) (interchain with G-Cter in ubiquitin)). The ATG16L1-binding motif motif lies at 761-778 (YLEWPTDETHREAFWLNL).

Belongs to the Toll-like receptor family. In terms of assembly, interacts with LY96, TLR1 and TLR6 (via extracellular domain). TLR2 seems to exist in heterodimers with either TLR1 or TLR6 before stimulation by the ligand. The heterodimers form bigger oligomers in response to their corresponding ligands as well as further heterotypic associations with other receptors such as CD14 and/or CD36. Binds MYD88 (via TIR domain). Interacts with TICAM1. Interacts with CNPY3. Interacts with ATG16L1. Interacts with PPP1R11. Interacts with TICAM2. Interacts with TIRAP. Ubiquitinated at Lys-754 by PPP1R11, leading to its degradation. Deubiquitinated by USP2. Post-translationally, glycosylation of Asn-442 is critical for secretion of the N-terminal ectodomain of TLR2.

The protein resides in the membrane. Its subcellular location is the cytoplasmic vesicle. It is found in the phagosome membrane. It localises to the membrane raft. Its function is as follows. Cooperates with LY96 to mediate the innate immune response to bacterial lipoproteins and other microbial cell wall components. Cooperates with TLR1 or TLR6 to mediate the innate immune response to bacterial lipoproteins or lipopeptides. Acts via MYD88 and TRAF6, leading to NF-kappa-B activation, cytokine secretion and the inflammatory response. May also promote apoptosis in response to lipoproteins. Forms activation clusters composed of several receptors depending on the ligand, these clusters trigger signaling from the cell surface and subsequently are targeted to the Golgi in a lipid-raft dependent pathway. Forms the cluster TLR2:TLR6:CD14:CD36 in response to diacylated lipopeptides and TLR2:TLR1:CD14 in response to triacylated lipopeptides. In Ovis aries (Sheep), this protein is Toll-like receptor 2 (TLR2).